The following is a 151-amino-acid chain: Ribosomal RNA large subunit methyltransferase H (151 aa).

S-adenosyl-L-methionine-binding positions include Leu73, Gly100, and 119 to 124 (LSKMTL).

This sequence belongs to the RNA methyltransferase RlmH family. In terms of assembly, homodimer.

The protein resides in the cytoplasm. It catalyses the reaction pseudouridine(1915) in 23S rRNA + S-adenosyl-L-methionine = N(3)-methylpseudouridine(1915) in 23S rRNA + S-adenosyl-L-homocysteine + H(+). Its function is as follows. Specifically methylates the pseudouridine at position 1915 (m3Psi1915) in 23S rRNA. The sequence is that of Ribosomal RNA large subunit methyltransferase H from Campylobacter lari (strain RM2100 / D67 / ATCC BAA-1060).